The chain runs to 388 residues: Succinate--CoA ligase [ADP-forming] subunit beta (388 aa).

Positions 9 to 244 (KQLFAEYGLP…PSQEDSREAH (236 aa)) constitute an ATP-grasp domain. ATP is bound by residues lysine 46, 53-55 (GRG), glutamate 99, threonine 102, and glutamate 107. Residues asparagine 199 and aspartate 213 each coordinate Mg(2+). Substrate-binding positions include asparagine 264 and 321–323 (GIV).

It belongs to the succinate/malate CoA ligase beta subunit family. Heterotetramer of two alpha and two beta subunits. Requires Mg(2+) as cofactor.

The catalysed reaction is succinate + ATP + CoA = succinyl-CoA + ADP + phosphate. It catalyses the reaction GTP + succinate + CoA = succinyl-CoA + GDP + phosphate. The protein operates within carbohydrate metabolism; tricarboxylic acid cycle; succinate from succinyl-CoA (ligase route): step 1/1. Functionally, succinyl-CoA synthetase functions in the citric acid cycle (TCA), coupling the hydrolysis of succinyl-CoA to the synthesis of either ATP or GTP and thus represents the only step of substrate-level phosphorylation in the TCA. The beta subunit provides nucleotide specificity of the enzyme and binds the substrate succinate, while the binding sites for coenzyme A and phosphate are found in the alpha subunit. The sequence is that of Succinate--CoA ligase [ADP-forming] subunit beta from Pseudoalteromonas translucida (strain TAC 125).